Consider the following 352-residue polypeptide: 3-dehydroquinate synthase (352 aa).

NAD(+) contacts are provided by residues 60–65 (DGEGAK), 118–119 (TT), K131, K140, and 158–161 (FLET). 3 residues coordinate Zn(2+): E173, H237, and H253.

This sequence belongs to the sugar phosphate cyclases superfamily. Dehydroquinate synthase family. Requires NAD(+) as cofactor. Co(2+) serves as cofactor. It depends on Zn(2+) as a cofactor.

It localises to the cytoplasm. It catalyses the reaction 7-phospho-2-dehydro-3-deoxy-D-arabino-heptonate = 3-dehydroquinate + phosphate. It participates in metabolic intermediate biosynthesis; chorismate biosynthesis; chorismate from D-erythrose 4-phosphate and phosphoenolpyruvate: step 2/7. Catalyzes the conversion of 3-deoxy-D-arabino-heptulosonate 7-phosphate (DAHP) to dehydroquinate (DHQ). This is 3-dehydroquinate synthase from Sulfurisphaera tokodaii (strain DSM 16993 / JCM 10545 / NBRC 100140 / 7) (Sulfolobus tokodaii).